We begin with the raw amino-acid sequence, 763 residues long: 5-methyltetrahydropteroyltriglutamate--homocysteine methyltransferase (763 aa).

Residues 16-19 (RELK) and Lys117 contribute to the 5-methyltetrahydropteroyltri-L-glutamate site. L-homocysteine contacts are provided by residues 438-440 (IGS) and Glu491. L-methionine is bound by residues 438-440 (IGS) and Glu491. 5-methyltetrahydropteroyltri-L-glutamate contacts are provided by residues 522 to 523 (RC) and Trp568. Residue Asp606 coordinates L-homocysteine. An L-methionine-binding site is contributed by Asp606. Glu612 contacts 5-methyltetrahydropteroyltri-L-glutamate. Zn(2+) contacts are provided by His648, Cys650, and Glu672. Catalysis depends on His701, which acts as the Proton donor. A Zn(2+)-binding site is contributed by Cys733.

This sequence belongs to the vitamin-B12 independent methionine synthase family. The cofactor is Zn(2+).

It catalyses the reaction 5-methyltetrahydropteroyltri-L-glutamate + L-homocysteine = tetrahydropteroyltri-L-glutamate + L-methionine. It functions in the pathway amino-acid biosynthesis; L-methionine biosynthesis via de novo pathway; L-methionine from L-homocysteine (MetE route): step 1/1. Catalyzes the transfer of a methyl group from 5-methyltetrahydrofolate to homocysteine resulting in methionine formation. This is 5-methyltetrahydropteroyltriglutamate--homocysteine methyltransferase from Pseudomonas paraeruginosa (strain DSM 24068 / PA7) (Pseudomonas aeruginosa (strain PA7)).